A 578-amino-acid chain; its full sequence is Peptidyl-prolyl cis-trans isomerase-like 2 (578 aa).

One can recognise a U-box domain in the interval 40 to 114; the sequence is RRLPFNFCAA…SDSLGAGLSD (75 aa). Positions 240 to 260 are disordered; that stretch reads KAREQGGDVNRSSTALTKPTG. Positions 321–475 constitute a PPIase cyclophilin-type domain; sequence ATGFARMETN…NKILIKDIVI (155 aa). Residues 505-578 form a disordered region; that stretch reads GTDDDKTTWT…GGGFGNFDNW (74 aa). Over residues 538–548 the composition is skewed to polar residues; the sequence is KTTTQQSTPTV. Positions 551-560 are enriched in acidic residues; the sequence is ADLEDVDTWE. The segment covering 569–578 has biased composition (gly residues); sequence GGGFGNFDNW.

The protein belongs to the cyclophilin-type PPIase family. PPIL2 subfamily.

Its subcellular location is the nucleus. It catalyses the reaction [protein]-peptidylproline (omega=180) = [protein]-peptidylproline (omega=0). It carries out the reaction S-ubiquitinyl-[E2 ubiquitin-conjugating enzyme]-L-cysteine + [acceptor protein]-L-lysine = [E2 ubiquitin-conjugating enzyme]-L-cysteine + N(6)-ubiquitinyl-[acceptor protein]-L-lysine.. It functions in the pathway protein modification; protein ubiquitination. Its function is as follows. May catalyze the cis-trans isomerization of proline imidic peptide bonds in oligopeptides thereby assisting the folding of proteins. May also function as a chaperone, playing a role in intracellular transport of proteins. May also have a protein ubiquitin ligase activity acting as an E3 ubiquitin protein ligase or as a ubiquitin-ubiquitin ligase promoting elongation of ubiquitin chains on proteins. The protein is Peptidyl-prolyl cis-trans isomerase-like 2 (CYP8) of Gibberella zeae (strain ATCC MYA-4620 / CBS 123657 / FGSC 9075 / NRRL 31084 / PH-1) (Wheat head blight fungus).